We begin with the raw amino-acid sequence, 122 residues long: MIQMQSTLDVACNSGARRVQCIKVLGGSHRRYAGIGDIIKVSVKEAIPRAKAKKGDVYNAVVVRTKKGVRRPDGSVIRFDRNAAVLLNANLAPIGTRIFGPVTRELRTEQFMKIVSLAPEVL.

It belongs to the universal ribosomal protein uL14 family. In terms of assembly, part of the 50S ribosomal subunit. Forms a cluster with proteins L3 and L19. In the 70S ribosome, L14 and L19 interact and together make contacts with the 16S rRNA in bridges B5 and B8.

Binds to 23S rRNA. Forms part of two intersubunit bridges in the 70S ribosome. In Shewanella denitrificans (strain OS217 / ATCC BAA-1090 / DSM 15013), this protein is Large ribosomal subunit protein uL14.